We begin with the raw amino-acid sequence, 333 residues long: Ketol-acid reductoisomerase (NADP(+)) (333 aa).

The KARI N-terminal Rossmann domain occupies 2-182 (AKIFYDSDCN…GASRAGIILT (181 aa)). NADP(+) is bound by residues 25 to 28 (FGSQ), Ser51, Ser53, and 83 to 86 (DEKQ). His108 is a catalytic residue. Gly134 is an NADP(+) binding site. The region spanning 183–328 (TFKEETETDL…KELRKMMPWI (146 aa)) is the KARI C-terminal knotted domain. The Mg(2+) site is built by Asp191, Glu195, Glu227, and Glu231. Ser252 contacts substrate.

This sequence belongs to the ketol-acid reductoisomerase family. It depends on Mg(2+) as a cofactor.

It catalyses the reaction (2R)-2,3-dihydroxy-3-methylbutanoate + NADP(+) = (2S)-2-acetolactate + NADPH + H(+). It carries out the reaction (2R,3R)-2,3-dihydroxy-3-methylpentanoate + NADP(+) = (S)-2-ethyl-2-hydroxy-3-oxobutanoate + NADPH + H(+). It functions in the pathway amino-acid biosynthesis; L-isoleucine biosynthesis; L-isoleucine from 2-oxobutanoate: step 2/4. It participates in amino-acid biosynthesis; L-valine biosynthesis; L-valine from pyruvate: step 2/4. Functionally, involved in the biosynthesis of branched-chain amino acids (BCAA). Catalyzes an alkyl-migration followed by a ketol-acid reduction of (S)-2-acetolactate (S2AL) to yield (R)-2,3-dihydroxy-isovalerate. In the isomerase reaction, S2AL is rearranged via a Mg-dependent methyl migration to produce 3-hydroxy-3-methyl-2-ketobutyrate (HMKB). In the reductase reaction, this 2-ketoacid undergoes a metal-dependent reduction by NADPH to yield (R)-2,3-dihydroxy-isovalerate. The sequence is that of Ketol-acid reductoisomerase (NADP(+)) from Caldicellulosiruptor bescii (strain ATCC BAA-1888 / DSM 6725 / KCTC 15123 / Z-1320) (Anaerocellum thermophilum).